The primary structure comprises 214 residues: Small ribosomal subunit protein uS3c (214 aa).

Positions 39 to 111 (IRTYLNKLAK…QLTINIIEVE (73 aa)) constitute a KH type-2 domain.

It belongs to the universal ribosomal protein uS3 family. In terms of assembly, part of the 30S ribosomal subunit.

Its subcellular location is the plastid. The protein resides in the chloroplast. The polypeptide is Small ribosomal subunit protein uS3c (rps3) (Trieres chinensis (Marine centric diatom)).